A 652-amino-acid chain; its full sequence is Type III restriction-modification enzyme StyLTI Mod subunit (652 aa).

Positions 135–138 (DPPY) are binding of S-adenosyl methionine.

This sequence belongs to the N(4)/N(6)-methyltransferase family. In terms of assembly, homodimer, also forms a functional restriction-competent complex with Res.

It carries out the reaction a 2'-deoxyadenosine in DNA + S-adenosyl-L-methionine = an N(6)-methyl-2'-deoxyadenosine in DNA + S-adenosyl-L-homocysteine + H(+). In terms of biological role, a beta subtype methylase that binds the system-specific DNA recognition site 5'-CAGAG-3' and methylates A-4 (of only 1 strand as the other does not have an A residue). DNA restriction requires both the Res and Mod subunits. The chain is Type III restriction-modification enzyme StyLTI Mod subunit from Salmonella typhimurium (strain LT2 / SGSC1412 / ATCC 700720).